Reading from the N-terminus, the 85-residue chain is Colicin-E8 immunity protein in ColE6 (85 aa).

Belongs to the colicins ColE2/ColE8/ColE9 and pyocins S1/S2 family.

The sequence is that of Colicin-E8 immunity protein in ColE6 (imm) from Escherichia coli.